The chain runs to 308 residues: Isoaspartyl peptidase/L-asparaginase (308 aa).

Residue methionine 1 is modified to N-acetylmethionine. Threonine 168 acts as the Nucleophile in catalysis. Substrate contacts are provided by residues 196–199 (RVGD) and 219–222 (TGHG).

This sequence belongs to the Ntn-hydrolase family. Heterodimer of an alpha and beta chain produced by autocleavage. This heterodimer may then dimerize in turn, giving rise to a heterotetramer. Cleaved into an alpha and beta chain by autocatalysis; this activates the enzyme. The N-terminal residue of the beta subunit is responsible for the nucleophile hydrolase activity.

The protein localises to the cytoplasm. It catalyses the reaction L-asparagine + H2O = L-aspartate + NH4(+). The enzyme catalyses Cleavage of a beta-linked Asp residue from the N-terminus of a polypeptide.. Has both L-asparaginase and beta-aspartyl peptidase activity. May be involved in the production of L-aspartate, which can act as an excitatory neurotransmitter in some brain regions. Is highly active with L-Asp beta-methyl ester. Besides, has catalytic activity toward beta-aspartyl dipeptides and their methyl esters, including beta-L-Asp-L-Phe, beta-L-Asp-L-Phe methyl ester (aspartame), beta-L-Asp-L-Ala, beta-L-Asp-L-Leu and beta-L-Asp-L-Lys. Does not have aspartylglucosaminidase activity and is inactive toward GlcNAc-L-Asn. Likewise, has no activity toward glutamine. This is Isoaspartyl peptidase/L-asparaginase (ASRGL1) from Bos taurus (Bovine).